Here is a 406-residue protein sequence, read N- to C-terminus: uncharacterized protein (406 aa).

This is an uncharacterized protein from Connochaetes taurinus (Blue wildebeest).